Reading from the N-terminus, the 375-residue chain is DNA replication and repair protein RecF (375 aa).

30 to 37 (GENAQGKT) provides a ligand contact to ATP.

It belongs to the RecF family.

The protein localises to the cytoplasm. Its function is as follows. The RecF protein is involved in DNA metabolism; it is required for DNA replication and normal SOS inducibility. RecF binds preferentially to single-stranded, linear DNA. It also seems to bind ATP. The chain is DNA replication and repair protein RecF from Bacillus thuringiensis (strain Al Hakam).